A 211-amino-acid chain; its full sequence is Ion-translocating oxidoreductase complex subunit G (211 aa).

The chain crosses the membrane as a helical span at residues Gly-9–Leu-29. Thr-175 carries the FMN phosphoryl threonine modification.

The protein belongs to the RnfG family. In terms of assembly, the complex is composed of six subunits: RnfA, RnfB, RnfC, RnfD, RnfE and RnfG. FMN is required as a cofactor.

It is found in the cell inner membrane. Part of a membrane-bound complex that couples electron transfer with translocation of ions across the membrane. The sequence is that of Ion-translocating oxidoreductase complex subunit G from Vibrio parahaemolyticus serotype O3:K6 (strain RIMD 2210633).